The primary structure comprises 87 residues: U3-theraphotoxin-Hhn1a 15 (87 aa).

The N-terminal stretch at 1-24 is a signal peptide; sequence MVNMKASMFLTFAGLVLLLVVCYA. The propeptide occupies 25-52; the sequence is SESEEKEFPKEMLSSIFAVDNDFKQEER. Disulfide bonds link Cys54–Cys67, Cys61–Cys72, and Cys66–Cys79.

It belongs to the neurotoxin 10 (Hwtx-1) family. 51 (Hntx-8) subfamily. Hntx-8 sub-subfamily. In terms of tissue distribution, expressed by the venom gland.

The protein resides in the secreted. In terms of biological role, ion channel inhibitor. The chain is U3-theraphotoxin-Hhn1a 15 from Cyriopagopus hainanus (Chinese bird spider).